Here is a 791-residue protein sequence, read N- to C-terminus: Linear element protein rec10 (791 aa).

2 disordered regions span residues asparagine 462–asparagine 523 and leucine 644–serine 672. The Nuclear localization signal motif lies at glutamine 485 to phenylalanine 492. Over residues alanine 493–serine 503 the composition is skewed to basic residues. Residues leucine 644 to cysteine 657 show a composition bias toward polar residues.

As to quaternary structure, component of linear elements (LinEs), which are similar to synaptonemal complexes, at least composed of rec27, rec25, rec10 and mug20. Interacts with rec25; the interaction is direct. Interacts with hop1 (via N-terminus); the interaction is direct. Interacts with rec15 (via C-terminus); the interaction is direct.

Its subcellular location is the nucleus. It localises to the chromosome. Organizes linear element components on chromosomes and is thus required for meiotic DNA recombination. The chain is Linear element protein rec10 from Schizosaccharomyces pombe (strain 972 / ATCC 24843) (Fission yeast).